Consider the following 460-residue polypeptide: Bifunctional protein GlmU (460 aa).

The interval 1 to 229 (MKNYAIILAA…FDESLGVNDR (229 aa)) is pyrophosphorylase. Residues 8-11 (LAAG), Lys22, Gln72, and 77-78 (GT) contribute to the UDP-N-acetyl-alpha-D-glucosamine site. Residue Asp102 participates in Mg(2+) binding. Gly139, Glu154, Asn169, and Asn227 together coordinate UDP-N-acetyl-alpha-D-glucosamine. Asn227 contributes to the Mg(2+) binding site. Residues 230–250 (LALAQAEVIMQERINKQHMLN) form a linker region. The N-acetyltransferase stretch occupies residues 251–460 (GVTLQNPAAT…RLPHHPDQPQ (210 aa)). Residues Arg332 and Lys350 each coordinate UDP-N-acetyl-alpha-D-glucosamine. His362 (proton acceptor) is an active-site residue. Positions 365 and 376 each coordinate UDP-N-acetyl-alpha-D-glucosamine. Residues Ala379, 385-386 (NY), Ser404, Ala422, and Arg439 each bind acetyl-CoA.

The protein in the N-terminal section; belongs to the N-acetylglucosamine-1-phosphate uridyltransferase family. This sequence in the C-terminal section; belongs to the transferase hexapeptide repeat family. Homotrimer. It depends on Mg(2+) as a cofactor.

It is found in the cytoplasm. It carries out the reaction alpha-D-glucosamine 1-phosphate + acetyl-CoA = N-acetyl-alpha-D-glucosamine 1-phosphate + CoA + H(+). It catalyses the reaction N-acetyl-alpha-D-glucosamine 1-phosphate + UTP + H(+) = UDP-N-acetyl-alpha-D-glucosamine + diphosphate. It functions in the pathway nucleotide-sugar biosynthesis; UDP-N-acetyl-alpha-D-glucosamine biosynthesis; N-acetyl-alpha-D-glucosamine 1-phosphate from alpha-D-glucosamine 6-phosphate (route II): step 2/2. Its pathway is nucleotide-sugar biosynthesis; UDP-N-acetyl-alpha-D-glucosamine biosynthesis; UDP-N-acetyl-alpha-D-glucosamine from N-acetyl-alpha-D-glucosamine 1-phosphate: step 1/1. It participates in bacterial outer membrane biogenesis; LPS lipid A biosynthesis. In terms of biological role, catalyzes the last two sequential reactions in the de novo biosynthetic pathway for UDP-N-acetylglucosamine (UDP-GlcNAc). The C-terminal domain catalyzes the transfer of acetyl group from acetyl coenzyme A to glucosamine-1-phosphate (GlcN-1-P) to produce N-acetylglucosamine-1-phosphate (GlcNAc-1-P), which is converted into UDP-GlcNAc by the transfer of uridine 5-monophosphate (from uridine 5-triphosphate), a reaction catalyzed by the N-terminal domain. This is Bifunctional protein GlmU from Streptococcus equi subsp. zooepidemicus (strain ATCC 35246 / C74-63).